Here is a 568-residue protein sequence, read N- to C-terminus: Protein phosphatase 1 regulatory inhibitor subunit 16B (568 aa).

Residues 15-55 adopt a coiled-coil conformation; it reads EKVPTLERLRAAQKRRAQQLKKWAQYEQDLQHRKRKHERKR. Serine 69 bears the Phosphoserine mark. 4 ANK repeats span residues 100 to 129, 133 to 162, 228 to 257, and 261 to 290; these read DGLT…NVNA, ELWT…DLLA, QGAT…RVDV, and DGWE…SLSA. Positions 327–346 are disordered; that stretch reads RHKSSLSRRTSSAGSRGKVV. 3 positions are modified to phosphoserine: serine 333, serine 337, and serine 350. The span at 333 to 342 shows a compositional bias: low complexity; sequence SRRTSSAGSR. A disordered region spans residues 373-404; it reads SASEDQRNSTYNGDIRETRTDQENKDPNPRLE. The segment covering 386-404 has biased composition (basic and acidic residues); it reads DIRETRTDQENKDPNPRLE. Serine 477 bears the Phosphoserine mark. Positions 504 to 525 are disordered; that stretch reads GSGVSRTGEGSSEGKAPLIGGR. The stretch at 531-560 is one ANK 5 repeat; sequence SNGTSVYYTVTSGDPPLLKFKAPIEEMEEK. Cysteine 564 is lipidated: S-palmitoyl cysteine. Cysteine 565 is subject to Cysteine methyl ester. Residue cysteine 565 is the site of S-farnesyl cysteine attachment. Residues 566–568 constitute a propeptide, removed in mature form; sequence RIS.

Interacts with PPP1CA, PPP1CB and MSN. Interacts (via its fourth ankyrin repeat) with the mature dimeric form of RPSA/LAMR1. Interacts with EEF1A1. Interacts with PTEN. Interacts with ECE1. Phosphorylated by PKA and, after PKA priming, by GSK3B. Phosphorylation by GSK3B reduces its association with PP1C and enhances PP1C activity. Dephosphorylation by its associated PP1C results in enhanced association with PP1C, but reduced PP1C activity.

It localises to the cell membrane. The protein localises to the nucleus. Its subcellular location is the cell projection. Functionally, regulator of protein phosphatase 1 (PP1) that acts as a positive regulator of pulmonary endothelial cell (EC) barrier function. Protects the endothelial barrier from lipopolysaccharide (LPS)-induced vascular leakage. Involved in the regulation of the PI3K/AKT signaling pathway. Involved in the regulation of angiogenesis and endothelial cell proliferation through the control of ECE1 dephosphorylation, trafficking and activity. Involved in the regulation of endothelial cell filopodia extension. May be a downstream target for TGF-beta1 signaling cascade in endothelial cells. Involved in PKA-mediated moesin dephosphorylation which is important in EC barrier protection against thrombin stimulation. Promotes the interaction of PPP1CA with RPSA/LAMR1 and in turn facilitates the dephosphorylation of RPSA/LAMR1. Involved in the dephosphorylation of EEF1A1. In Bos taurus (Bovine), this protein is Protein phosphatase 1 regulatory inhibitor subunit 16B (PPP1R16B).